A 227-amino-acid polypeptide reads, in one-letter code: Inner membrane lipoprotein SadB (227 aa).

Residues 1–21 (MHKNGKFIPLLALGFTFFLSG) form the signal peptide. Cysteine 22 carries N-palmitoyl cysteine lipidation. A lipid anchor (S-diacylglycerol cysteine) is attached at cysteine 22. The stretch at 31–68 (VEEMKEQQKEQETKINLLEKQQKEQEAKINLLEKQQAT) forms a coiled coil.

As to quaternary structure, homotrimer.

Its subcellular location is the cell inner membrane. Its function is as follows. Required for proper surface expression of the autotransporter adhesin SadA. Could be directly involved in the biogenesis of functionally active SadA. This is Inner membrane lipoprotein SadB from Salmonella typhimurium (strain LT2 / SGSC1412 / ATCC 700720).